A 488-amino-acid polypeptide reads, in one-letter code: Probable glycine dehydrogenase (decarboxylating) subunit 2 (488 aa).

K274 is modified (N6-(pyridoxal phosphate)lysine).

It belongs to the GcvP family. C-terminal subunit subfamily. In terms of assembly, the glycine cleavage system is composed of four proteins: P, T, L and H. In this organism, the P 'protein' is a heterodimer of two subunits. The cofactor is pyridoxal 5'-phosphate.

The catalysed reaction is N(6)-[(R)-lipoyl]-L-lysyl-[glycine-cleavage complex H protein] + glycine + H(+) = N(6)-[(R)-S(8)-aminomethyldihydrolipoyl]-L-lysyl-[glycine-cleavage complex H protein] + CO2. Its function is as follows. The glycine cleavage system catalyzes the degradation of glycine. The P protein binds the alpha-amino group of glycine through its pyridoxal phosphate cofactor; CO(2) is released and the remaining methylamine moiety is then transferred to the lipoamide cofactor of the H protein. This chain is Probable glycine dehydrogenase (decarboxylating) subunit 2, found in Listeria innocua serovar 6a (strain ATCC BAA-680 / CLIP 11262).